Reading from the N-terminus, the 32-residue chain is Alpha-conotoxin RgIA (32 aa).

Positions 1–19 (SNKRKNAAMLDMIAQHAIR) are excised as a propeptide. 2 disulfide bridges follow: Cys21-Cys27 and Cys22-Cys31.

The protein belongs to the conotoxin A superfamily. The disulfide bond CysI-CysIII is important for alpha-9-alpha-10 subtype inhibition, whereas the bond CysII-CysIV contributes to GABA(B) modulation. As to expression, expressed by the venom duct.

Its subcellular location is the secreted. Functionally, this toxin target two types of receptors, the nicotinic acetylcholine receptor (nAChR) and the G-protein-coupled receptor GABA(B). It specifically inhibits the alpha-9-alpha-10/CHRNA9-CHRNA10 nAChR, with preference for rat receptors. It interacts with the alpha-10(+)/alpha-9(-)interface of the receptor. It shows a two order of magnitude species difference potency for the rat versus human alpha-9-alpha-10 nAChR, due to the Thr-86 located in the alpha-9 nAChR subunit. This toxin also shows inhibition of high voltage-activated (HVA) calcium channels (Cav2.2) by acting on GABA(B) receptors (GABBR1 and GABBR2). In vivo, this toxin produces an acute antinociceptive effect in peripheral nerve-injured rats, which may be related to the inhibition of immune cell buildup at the site of nerve injury. In addition, when intramuscularly injected into rats following chronic constriction injury of the sciatic nerve, this toxin protects peripheral nervous tissues as well as prevents central maladaptive plasticity by inhibiting glial cell activation. This Conus regius (Crown cone) protein is Alpha-conotoxin RgIA.